The sequence spans 331 residues: Tetraacyldisaccharide 4'-kinase (331 aa).

55 to 62 (TAGGNGKT) lines the ATP pocket.

Belongs to the LpxK family.

The catalysed reaction is a lipid A disaccharide + ATP = a lipid IVA + ADP + H(+). The protein operates within glycolipid biosynthesis; lipid IV(A) biosynthesis; lipid IV(A) from (3R)-3-hydroxytetradecanoyl-[acyl-carrier-protein] and UDP-N-acetyl-alpha-D-glucosamine: step 6/6. In terms of biological role, transfers the gamma-phosphate of ATP to the 4'-position of a tetraacyldisaccharide 1-phosphate intermediate (termed DS-1-P) to form tetraacyldisaccharide 1,4'-bis-phosphate (lipid IVA). The chain is Tetraacyldisaccharide 4'-kinase from Edwardsiella ictaluri (strain 93-146).